The following is a 337-amino-acid chain: MLTLPFDESVVMPESQMCRKFSRECEDQKQIKKPESFSKQIVLRGKSIKRAPGEETEKEEEEEDREEEDENGLPRRRGLRKKKTTKLRLERVKFRRQEANARERNRMHGLNDALDNLRKVVPCYSKTQKLSKIETLRLAKNYIWALSEILRIGKRPDLLTFVQNLCKGLSQPTTNLVAGCLQLNARSFLMGQGGEAAHHTRSPYSTFYPPYHSPELTTPPGHGTLDNSKSMKPYNYCSAYESFYESTSPECASPQFEGPLSPPPINYNGIFSLKQEETLDYGKNYNYGMHYCAVPPRGPLGQGAMFRLPTDSHFPYDLHLRSQSLTMQDELNAVFHN.

Residues 43-82 (LRGKSIKRAPGEETEKEEEEEDREEEDENGLPRRRGLRKK) form a disordered region. Positions 54–71 (EETEKEEEEEDREEEDEN) are enriched in acidic residues. Residues 80 to 86 (RKKKTTK) carry the Nuclear localization signal motif. One can recognise a bHLH domain in the interval 94-146 (FRRQEANARERNRMHGLNDALDNLRKVVPCYSKTQKLSKIETLRLAKNYIWAL).

As to quaternary structure, efficient DNA binding requires dimerization with another bHLH protein.

Its subcellular location is the nucleus. Activates E box-dependent transcription in collaboration with TCF3/E47. May be a trans-acting factor involved in the development and maintenance of the mammalian nervous system. Transactivates the promoter of its own gene. The chain is Neurogenic differentiation factor 6 (NEUROD6) from Homo sapiens (Human).